Reading from the N-terminus, the 354-residue chain is Rhodopsin (354 aa).

At 1–36 the chain is on the extracellular side; sequence MNGTEGPNFYVPMSNKTGIVRSPFEYPQYYLAEPWK. Asparagine 2 and asparagine 15 each carry an N-linked (GlcNAc...) asparagine glycan. The chain crosses the membrane as a helical span at residues 37-61; the sequence is YSVLAAYMFLLILLGLPINFMTLYV. The Cytoplasmic segment spans residues 62-73; sequence TIQHKKLRTPLN. A helical transmembrane segment spans residues 74-96; it reads YILLNLAFANHFMVLCGFTITMY. Topologically, residues 97 to 110 are extracellular; it reads TSLHGYFVFGQTGC. A disulfide bond links cysteine 110 and cysteine 187. The helical transmembrane segment at 111–133 threads the bilayer; that stretch reads YFEGFFATLGGEIALWSLVVLAI. The short motif at 134–136 is the 'Ionic lock' involved in activated form stabilization element; sequence ERY. The Cytoplasmic segment spans residues 134–152; sequence ERYIVVCKPMSNFRFGENH. Residues 153-173 traverse the membrane as a helical segment; that stretch reads AMMGVAFTWIMALACAVPPLF. The Extracellular portion of the chain corresponds to 174 to 202; that stretch reads GWSRYIPEGMQCSCGVDYYTLKPEVNNES. Residues 203–224 form a helical membrane-spanning segment; sequence FVIYMFVVHFLIPLIIISFCYG. Over 225 to 252 the chain is Cytoplasmic; it reads RLVCTVKEAAAQQQESATTQKAEKEVTR. Residues 253 to 274 form a helical membrane-spanning segment; it reads MVVIMVIFFLICWVPYAYVAFY. At 275 to 286 the chain is on the extracellular side; it reads IFTHQGSEFGPI. The chain crosses the membrane as a helical span at residues 287 to 308; the sequence is FMTVPAFFAKSSAIYNPVIYIM. An N6-(retinylidene)lysine modification is found at lysine 296. At 309-354 the chain is on the cytoplasmic side; that stretch reads LNKQFRNCMITTLCCGKNPFGDEDASSAATSKTEATSVSTSQVSPA. S-palmitoyl cysteine attachment occurs at residues cysteine 322 and cysteine 323. Residues 331 to 354 are disordered; sequence EDASSAATSKTEATSVSTSQVSPA. A compositionally biased stretch (low complexity) spans 334–354; it reads SSAATSKTEATSVSTSQVSPA.

Belongs to the G-protein coupled receptor 1 family. Opsin subfamily. Contains one covalently linked retinal chromophore. Upon light absorption, the covalently bound 11-cis-retinal is converted to all-trans-retinal. After hydrolysis of the Schiff base and release of the covalently bound all-trans-retinal, active rhodopsin is regenerated by binding of a fresh molecule of 11-cis-retinal. In terms of tissue distribution, retina. Localized in the ventral part of the retina.

The protein localises to the membrane. Its subcellular location is the cell projection. It localises to the cilium. The protein resides in the photoreceptor outer segment. In terms of biological role, photoreceptor required for image-forming vision at low light intensity. Required for photoreceptor cell viability after birth. May use a mixture of retinal and 3-dehydroretinal as visual pigment. Light-induced isomerization of 11-cis to all-trans retinal triggers a conformational change that activates signaling via G-proteins. Subsequent receptor phosphorylation mediates displacement of the bound G-protein alpha subunit by arrestin and terminates signaling. The sequence is that of Rhodopsin (RHO) from Aquarana catesbeiana (American bullfrog).